A 122-amino-acid chain; its full sequence is Fluoride-specific ion channel FluC (122 aa).

Helical transmembrane passes span leucine 6 to valine 26, serine 33 to phenylalanine 53, glycine 60 to phenylalanine 80, and leucine 101 to phenylalanine 121. Glycine 75 and threonine 78 together coordinate Na(+).

This sequence belongs to the fluoride channel Fluc/FEX (TC 1.A.43) family.

Its subcellular location is the cell inner membrane. The enzyme catalyses fluoride(in) = fluoride(out). With respect to regulation, na(+) is not transported, but it plays an essential structural role and its presence is essential for fluoride channel function. Fluoride-specific ion channel. Important for reducing fluoride concentration in the cell, thus reducing its toxicity. The chain is Fluoride-specific ion channel FluC from Campylobacter jejuni subsp. jejuni serotype O:2 (strain ATCC 700819 / NCTC 11168).